A 259-amino-acid polypeptide reads, in one-letter code: Small ribosomal subunit protein uS2 (259 aa).

It belongs to the universal ribosomal protein uS2 family.

The polypeptide is Small ribosomal subunit protein uS2 (Fervidobacterium nodosum (strain ATCC 35602 / DSM 5306 / Rt17-B1)).